The sequence spans 306 residues: tRNA dimethylallyltransferase (306 aa).

12–19 lines the ATP pocket; the sequence is GPTGVGKS. Residue 14 to 19 participates in substrate binding; sequence TGVGKS.

It belongs to the IPP transferase family. As to quaternary structure, monomer. The cofactor is Mg(2+).

It catalyses the reaction adenosine(37) in tRNA + dimethylallyl diphosphate = N(6)-dimethylallyladenosine(37) in tRNA + diphosphate. Its function is as follows. Catalyzes the transfer of a dimethylallyl group onto the adenine at position 37 in tRNAs that read codons beginning with uridine, leading to the formation of N6-(dimethylallyl)adenosine (i(6)A). In Desulfatibacillum aliphaticivorans, this protein is tRNA dimethylallyltransferase.